Reading from the N-terminus, the 1400-residue chain is MSSFESDSASDAESAFSDASSDFTPSSSVKSKGKVPLRDSTNTTAQPSAPATGDASDQYQKLSQLEHILKRPDTYIGSVEKTGVEMWSFDAATESMIYKEVHIVPGLYKIFDEILVNAADNKIRDPSMRNIKVNIDAENNTISVMNDGKGIPIEIHKKEKIYIPELIFGNLLTSSNYDDDEKKVTGGRNGYGAKLCNIFSTEFVLETADLNTSQVYKQTWTNNMANLTKPKITKLKSKKEYTKVTFKPDLSKFHMEMLDDDILSVLRRRVYDLCGTVKDCNIYLNDKKLSIRNFKSYVEMYVNAIRERSPDPVAPEGETRNYSTIVHEVFNDRWEVAFAVSDGSFNQVSFVNSIATTSGGTHVKYVSDQIITKLIDALTKKEKGKKKLNIKPQEVRNNMFVFINCLIENPAFTSQTKEQLTTRVAQFGGKPSEKIVISDQFIAKILKTSIADKIRTIVNANEDKEMSKADGSRKSRIKNQVKLVDANKAGTKEGYKCTLILTEGDSAMPLAVAGLTVVGRDYYGCFPLRGKLLNVREASIEQVSKNAEINSIKQIMGLQHKKRYTPENIKSLRYGHIMIMTDQDQDGSHIKGLIINFLETSFPGLLEIPGFLLEFITPIVKVTITGRGNHRVIPFYNMPEFEKWRETEGTTCKWKHKYFKGLGTSLESEGREYFAALDRHMKSFHALQDGDSQYIDMAFSKKKADERKDWLQAFRPGTHLDPQIREIPISEFINKELILFSMADNVRSIPSILDGFKPGQRKVLYGCFKRNLRSEIKVAQLVGYISEHTGYHHGEGSLAQTIVGLAQNFVGANNLNLLQPIGLFGSRAAGGKDFSAVRYIHTNITDLTRVIFNPLDDDLYTYVQDDAQTVEPEAYLPIIPMLLVNGAEGIGTGWSTNIPSFNPVDIVANIRRMMNGEEPVDMTPWFKGWEGDLERISPEKYKVSGKIEQVDDDTVEITEIPIKTWTNSVKEFLLAGLGNDKPWIKDMEEQHGINIRFVVRLSKEEMDKSLRMGLLERFKLISSISLSNMVAFDPQGRIKKYSSANEILKDYYWARLELYQRRKDMMAENFQNQLTRLSEQARFIKLIIEKKLTIANKKRSEMVDDLKKLKFTRFNKNGKPVHDEPLVEAEELAEEEEEAAGDISQLNLGLVAPEDESQYKPETTYSQYDYLLGMAIWSLTRERYEKLLRQRDEKQEELNELLKKSAKDLWNSDLDDFLVGWEEFLRADIEARNSFGPTAKTSTRKRARKSTKSEPAQKKTKSSTPKASTPTIKAEATPAQPVVKEETNKQPDLLSFFSKEPSVAKTVSAAPPKRKTPKSKPKKEIVSLFSDSSDDDITSFSVGDAKPTPKPSTNNILDELEDLKSSTFTPKVGAAGRRRPKSYALAESDGNESDEDYMSE.

Positions 1 to 30 (MSSFESDSASDAESAFSDASSDFTPSSSVK) are enriched in low complexity. The disordered stretch occupies residues 1–57 (MSSFESDSASDAESAFSDASSDFTPSSSVKSKGKVPLRDSTNTTAQPSAPATGDASD). Polar residues predominate over residues 39-57 (DSTNTTAQPSAPATGDASD). ATP-binding positions include N117, N146, 174-176 (SSN), and 187-194 (GRNGYGAK). The segment at 379 to 386 (TKKEKGKK) is interaction with DNA. 415–417 (QTK) lines the ATP pocket. The region spanning 497-613 (CTLILTEGDS…GLLEIPGFLL (117 aa)) is the Toprim domain. Mg(2+)-binding residues include E503, D582, and D584. Positions 749-1214 (IPSILDGFKP…SAKDLWNSDL (466 aa)) constitute a Topo IIA-type catalytic domain. Catalysis depends on Y839, which acts as the O-(5'-phospho-DNA)-tyrosine intermediate. Residues 1019 to 1028 (KLISSISLSN) are interaction with DNA. The disordered stretch occupies residues 1235–1400 (FGPTAKTSTR…NESDEDYMSE (166 aa)). The span at 1262-1271 (SSTPKASTPT) shows a compositional bias: low complexity. A compositionally biased stretch (basic residues) spans 1312-1321 (PKRKTPKSKP). The span at 1389–1400 (DGNESDEDYMSE) shows a compositional bias: acidic residues.

The protein belongs to the type II topoisomerase family. In terms of assembly, homodimer. Requires Mg(2+) as cofactor. Mn(2+) serves as cofactor. It depends on Ca(2+) as a cofactor.

The protein resides in the nucleus. The catalysed reaction is ATP-dependent breakage, passage and rejoining of double-stranded DNA.. In terms of biological role, control of topological states of DNA by transient breakage and subsequent rejoining of DNA strands. Topoisomerase II makes double-strand breaks. The polypeptide is DNA topoisomerase 2 (TOP2) (Meyerozyma guilliermondii (strain ATCC 6260 / CBS 566 / DSM 6381 / JCM 1539 / NBRC 10279 / NRRL Y-324) (Yeast)).